Consider the following 839-residue polypeptide: MGPRAKTISSLFFLLWVLAEPAENSDFYLPGDYLLGGLFSLHANMKGIVHLNFLQVPMCKEYEVKVIGYNLMQAMRFAVEEINNDSSLLPGVLLGYEIVDVCYISNNVQPVLYFLAHEDNLLPIQEDYSNYISRVVAVIGPDNSESVMTVANFLSLFLLPQITYSAISDELRDKVRFPALLRTTPSADHHIEAMVQLMLHFRWNWIIVLVSSDTYGRDNGQLLGERVARRDICIAFQETLPTLQPNQNMTSEERQRLVTIVDKLQQSTARVVVVFSPDLTLYHFFNEVLRQNFTGAVWIASESWAIDPVLHNLTELRHLGTFLGITIQSVPIPGFSEFREWGPQAGPPPLSRTSQSYTCNQECDNCLNATLSFNTILRLSGERVVYSVYSAVYAVAHALHSLLGCDKSTCTKRVVYPWQLLEEIWKVNFTLLDHQIFFDPQGDVALHLEIVQWQWDRSQNPFQSVASYYPLQRQLKNIQDISWHTINNTIPMSMCSKRCQSGQKKKPVGIHVCCFECIDCLPGTFLNHTEDEYECQACPNNEWSYQSETSCFKRQLVFLEWHEAPTIAVALLAALGFLSTLAILVIFWRHFQTPIVRSAGGPMCFLMLTLLLVAYMVVPVYVGPPKVSTCLCRQALFPLCFTICISCIAVRSFQIVCAFKMASRFPRAYSYWVRYQGPYVSMAFITVLKMVIVVIGMLATGLSPTTRTDPDDPKITIVSCNPNYRNSLLFNTSLDLLLSVVGFSFAYMGKELPTNYNEAKFITLSMTFYFTSSVSLCTFMSAYSGVLVTIVDLLVTVLNLLAISLGYFGPKCYMILFYPERNTPAYFNSMIQGYTMRRD.

Residues 1–19 form the signal peptide; sequence MGPRAKTISSLFFLLWVLA. Topologically, residues 20 to 566 are extracellular; that stretch reads EPAENSDFYL…VFLEWHEAPT (547 aa). 8 N-linked (GlcNAc...) asparagine glycosylation sites follow: Asn-84, Asn-248, Asn-292, Asn-312, Asn-368, Asn-428, Asn-487, and Asn-527. The helical transmembrane segment at 567–587 threads the bilayer; that stretch reads IAVALLAALGFLSTLAILVIF. Residues 588 to 602 are Cytoplasmic-facing; sequence WRHFQTPIVRSAGGP. The chain crosses the membrane as a helical span at residues 603-623; that stretch reads MCFLMLTLLLVAYMVVPVYVG. Residues 624 to 635 are Extracellular-facing; sequence PPKVSTCLCRQA. A helical transmembrane segment spans residues 636-656; sequence LFPLCFTICISCIAVRSFQIV. At 657-681 the chain is on the cytoplasmic side; the sequence is CAFKMASRFPRAYSYWVRYQGPYVS. Residues 682–702 form a helical membrane-spanning segment; that stretch reads MAFITVLKMVIVVIGMLATGL. The Extracellular segment spans residues 703–727; that stretch reads SPTTRTDPDDPKITIVSCNPNYRNS. The helical transmembrane segment at 728 to 748 threads the bilayer; sequence LLFNTSLDLLLSVVGFSFAYM. At 749–760 the chain is on the cytoplasmic side; it reads GKELPTNYNEAK. Residues 761–781 traverse the membrane as a helical segment; that stretch reads FITLSMTFYFTSSVSLCTFMS. Topologically, residues 782-784 are extracellular; sequence AYS. The chain crosses the membrane as a helical span at residues 785–805; it reads GVLVTIVDLLVTVLNLLAISL. Residues 806–839 are Cytoplasmic-facing; that stretch reads GYFGPKCYMILFYPERNTPAYFNSMIQGYTMRRD.

Belongs to the G-protein coupled receptor 3 family. TAS1R subfamily. Forms heterodimers with TAS1R3.

The protein localises to the cell membrane. In terms of biological role, putative taste receptor. TAS1R2/TAS1R3 recognizes diverse natural and synthetic sweeteners. The polypeptide is Taste receptor type 1 member 2 (TAS1R2) (Homo sapiens (Human)).